Here is a 668-residue protein sequence, read N- to C-terminus: Bifunctional polymyxin resistance protein ArnA (668 aa).

A formyltransferase ArnAFT region spans residues 1–307; sequence MSAKTVVFAY…ELGLVDGSLL (307 aa). The Proton donor; for formyltransferase activity role is filled by His106. (6R)-10-formyltetrahydrofolate contacts are provided by residues Arg116 and 138-142; that span reads VKRAD. Positions 317 to 668 are dehydrogenase ArnADH; sequence RRTRVLILGV…IERPSNKEAC (352 aa). Residues Asp350 and 371 to 372 contribute to the NAD(+) site; that span reads DI. UDP-alpha-D-glucuronate-binding positions include Ala396, Tyr401, and 435-436; that span reads TS. The active-site Proton acceptor; for decarboxylase activity is the Glu437. Residues Arg463, Asn494, 528-537, and Tyr615 contribute to the UDP-alpha-D-glucuronate site; that span reads RLFDGGEQKR. Arg621 (proton donor; for decarboxylase activity) is an active-site residue.

In the N-terminal section; belongs to the Fmt family. UDP-L-Ara4N formyltransferase subfamily. It in the C-terminal section; belongs to the NAD(P)-dependent epimerase/dehydratase family. UDP-glucuronic acid decarboxylase subfamily. In terms of assembly, homohexamer, formed by a dimer of trimers.

The catalysed reaction is UDP-alpha-D-glucuronate + NAD(+) = UDP-beta-L-threo-pentopyranos-4-ulose + CO2 + NADH. It carries out the reaction UDP-4-amino-4-deoxy-beta-L-arabinose + (6R)-10-formyltetrahydrofolate = UDP-4-deoxy-4-formamido-beta-L-arabinose + (6S)-5,6,7,8-tetrahydrofolate + H(+). It participates in nucleotide-sugar biosynthesis; UDP-4-deoxy-4-formamido-beta-L-arabinose biosynthesis; UDP-4-deoxy-4-formamido-beta-L-arabinose from UDP-alpha-D-glucuronate: step 1/3. It functions in the pathway nucleotide-sugar biosynthesis; UDP-4-deoxy-4-formamido-beta-L-arabinose biosynthesis; UDP-4-deoxy-4-formamido-beta-L-arabinose from UDP-alpha-D-glucuronate: step 3/3. Its pathway is bacterial outer membrane biogenesis; lipopolysaccharide biosynthesis. Functionally, bifunctional enzyme that catalyzes the oxidative decarboxylation of UDP-glucuronic acid (UDP-GlcUA) to UDP-4-keto-arabinose (UDP-Ara4O) and the addition of a formyl group to UDP-4-amino-4-deoxy-L-arabinose (UDP-L-Ara4N) to form UDP-L-4-formamido-arabinose (UDP-L-Ara4FN). The modified arabinose is attached to lipid A and is required for resistance to polymyxin and cationic antimicrobial peptides. The chain is Bifunctional polymyxin resistance protein ArnA from Pseudomonas fluorescens (strain Pf0-1).